We begin with the raw amino-acid sequence, 124 residues long: Holo-[acyl-carrier-protein] synthase (124 aa).

The Mg(2+) site is built by Asp-7 and Glu-55.

Belongs to the P-Pant transferase superfamily. AcpS family. It depends on Mg(2+) as a cofactor.

It localises to the cytoplasm. The catalysed reaction is apo-[ACP] + CoA = holo-[ACP] + adenosine 3',5'-bisphosphate + H(+). In terms of biological role, transfers the 4'-phosphopantetheine moiety from coenzyme A to a Ser of acyl-carrier-protein. The chain is Holo-[acyl-carrier-protein] synthase from Borreliella afzelii (strain PKo) (Borrelia afzelii).